Here is a 159-residue protein sequence, read N- to C-terminus: Protein-export protein SecB (159 aa).

This sequence belongs to the SecB family. Homotetramer, a dimer of dimers. One homotetramer interacts with 1 SecA dimer.

The protein resides in the cytoplasm. Functionally, one of the proteins required for the normal export of preproteins out of the cell cytoplasm. It is a molecular chaperone that binds to a subset of precursor proteins, maintaining them in a translocation-competent state. It also specifically binds to its receptor SecA. The polypeptide is Protein-export protein SecB (Shewanella amazonensis (strain ATCC BAA-1098 / SB2B)).